Reading from the N-terminus, the 378-residue chain is Erythronate-4-phosphate dehydrogenase (378 aa).

Substrate-binding residues include serine 45 and threonine 66. The NAD(+) site is built by aspartate 146 and threonine 175. Arginine 208 is an active-site residue. Aspartate 232 provides a ligand contact to NAD(+). Glutamate 237 is a catalytic residue. Catalysis depends on histidine 254, which acts as the Proton donor. Residue glycine 257 participates in NAD(+) binding. Residue tyrosine 258 coordinates substrate.

This sequence belongs to the D-isomer specific 2-hydroxyacid dehydrogenase family. PdxB subfamily. In terms of assembly, homodimer.

It localises to the cytoplasm. It carries out the reaction 4-phospho-D-erythronate + NAD(+) = (R)-3-hydroxy-2-oxo-4-phosphooxybutanoate + NADH + H(+). It functions in the pathway cofactor biosynthesis; pyridoxine 5'-phosphate biosynthesis; pyridoxine 5'-phosphate from D-erythrose 4-phosphate: step 2/5. Functionally, catalyzes the oxidation of erythronate-4-phosphate to 3-hydroxy-2-oxo-4-phosphonooxybutanoate. In Salmonella arizonae (strain ATCC BAA-731 / CDC346-86 / RSK2980), this protein is Erythronate-4-phosphate dehydrogenase.